A 247-amino-acid chain; its full sequence is MAIPLLQYKPSSQNQRVPGYEVPNEDTPRIYRLEDAPSYSEIQELIWAAYRQIFSEHEILKFHRQINLESQLKNRTITVRDFIRGLAKSEAFQRLVVETNSNYRIVEISLKRILGRAPYNREEEIAWSIKIATDGFGGFVDALVDSEEYQINFGDNTVPYQRRRFKDRPFNLVTPRYGNYWRDKLENERYIAGDIKNFLDLAKSIEIKTVSYQPVSTANISIPDTTRNTVPRGIPVSVNPSASFPLR.

The PBS-linker domain maps to serine 11–arginine 189.

The protein belongs to the phycobilisome linker protein family. The phycobilisome is a hemidiscoidal structure that is composed of two distinct substructures: a core complex and a number of rods radiating from the core.

Its subcellular location is the cellular thylakoid membrane. Functionally, rod-core linker protein required for attachment of phycocyanin to allophycocyanin in cores of phycobilisomes. Linker polypeptides determine the state of aggregation and the location of the disk-shaped phycobiliprotein units within the phycobilisome and modulate their spectroscopic properties in order to mediate a directed and optimal energy transfer. In Mastigocladus laminosus (Fischerella sp.), this protein is Phycobilisome rod-core linker polypeptide CpcG2 (cpcG2).